Reading from the N-terminus, the 327-residue chain is Methionyl-tRNA formyltransferase (327 aa).

(6S)-5,6,7,8-tetrahydrofolate is bound at residue 121–124 (SLLP).

Belongs to the Fmt family.

The catalysed reaction is L-methionyl-tRNA(fMet) + (6R)-10-formyltetrahydrofolate = N-formyl-L-methionyl-tRNA(fMet) + (6S)-5,6,7,8-tetrahydrofolate + H(+). Attaches a formyl group to the free amino group of methionyl-tRNA(fMet). The formyl group appears to play a dual role in the initiator identity of N-formylmethionyl-tRNA by promoting its recognition by IF2 and preventing the misappropriation of this tRNA by the elongation apparatus. This chain is Methionyl-tRNA formyltransferase, found in Burkholderia pseudomallei (strain 668).